An 85-amino-acid polypeptide reads, in one-letter code: Large ribosomal subunit protein bL27 (85 aa).

The tract at residues 1–21 (MAHKKGVGSSKNGRESESKRL) is disordered.

The protein belongs to the bacterial ribosomal protein bL27 family.

The sequence is that of Large ribosomal subunit protein bL27 from Porphyromonas gingivalis (strain ATCC 33277 / DSM 20709 / CIP 103683 / JCM 12257 / NCTC 11834 / 2561).